Consider the following 78-residue polypeptide: Cell division topological specificity factor (78 aa).

The protein belongs to the MinE family.

Its function is as follows. Prevents the cell division inhibition by proteins MinC and MinD at internal division sites while permitting inhibition at polar sites. This ensures cell division at the proper site by restricting the formation of a division septum at the midpoint of the long axis of the cell. In Helicobacter hepaticus (strain ATCC 51449 / 3B1), this protein is Cell division topological specificity factor.